The chain runs to 124 residues: Chemotaxis protein CheY1 (124 aa).

One can recognise a Response regulatory domain in the interval 2-120; sequence KLLVVDDSST…VLKEKLEVVL (119 aa). The Mg(2+) site is built by Asp-7, Asp-8, Asp-53, and Asn-55. Asp-53 bears the 4-aspartylphosphate mark.

In terms of assembly, interacts (when phosphorylated) with FliM. Requires Mg(2+) as cofactor. Post-translationally, phosphorylated by CheAY. Dephosphorylated (inactivated) by CheZ.

Its subcellular location is the cytoplasm. Its function is as follows. Chemotactic response regulator protein that modulates the rotation direction of bacterial flagellar motors. Plays an important role in the colonization and infection of Helicobacter pylori. Upon phosphorylation by CheA, interacts with the flagellar motor protein FliM to cause clockwise flagellar rotation and bacterial reversals, as opposed to straight swimming when CheY1 is not phosphorylated. This chain is Chemotaxis protein CheY1, found in Helicobacter pylori (strain ATCC 700392 / 26695) (Campylobacter pylori).